The primary structure comprises 196 residues: SERTA domain-containing protein 3 (196 aa).

A disordered region spans residues 1 to 21 (MVGGLKRKHSDLEEEEERWEW). Residues 26–73 (LQSYQQALLRISLDKVQRSLGPRAPSLRRHVLIHNTLQQLQAALRLAP) form the SERTA domain. The disordered stretch occupies residues 104–125 (TSMDGTEPPQNPVTPLGLQNEV).

In terms of assembly, interacts with RPA2. As to quaternary structure, (Microbial infection) Interacts with influenza virus PA, PB1 and PB2,leading to inhibition of RdRp complex assembly. (Microbial infection) Interacts with zika virus capsid protein.

The protein localises to the nucleus. In terms of biological role, antiviral interferon-stimulated protein that plays a role in innate immunity and in the suppression of viruses through different mechanisms. Plays a role in the late phase response of TLR-induced immune effector expression. During influenza infection, interacts with PB2, PB1, and PA to disrupt the formation of the viral RdRp complex. Inhibits zika virus by interacting with the capsid protein in the nucleolus and reducing its abundance through proteasomal degradation. Strong transcriptional coactivator. The sequence is that of SERTA domain-containing protein 3 (SERTAD3) from Homo sapiens (Human).